The following is a 461-amino-acid chain: Photosystem II CP43 reaction center protein (461 aa).

The propeptide occupies 1 to 2 (ME). T3 is subject to N-acetylthreonine. Residue T3 is modified to Phosphothreonine. 5 helical membrane-spanning segments follow: residues 57 to 81 (LFEV…PHLA), 122 to 143 (LAGP…KRKK), 166 to 188 (KAMY…RSIT), 243 to 263 (RPSP…LSYS), and 279 to 300 (WFNN…ASQA). Residue E355 participates in [CaMn4O5] cluster binding. Residues 435-459 (RARAAAIGFEKGIDRSREIARKLKP) form a helical membrane-spanning segment.

Belongs to the PsbB/PsbC family. PsbC subfamily. PSII is composed of 1 copy each of membrane proteins PsbA, PsbB, PsbC, PsbD, PsbE, PsbF, PsbH, PsbI, PsbJ, PsbK, PsbL, PsbM, PsbT, PsbY, PsbZ, Psb30/Ycf12, at least 3 peripheral proteins of the oxygen-evolving complex and a large number of cofactors. It forms dimeric complexes. Binds multiple chlorophylls and provides some of the ligands for the Ca-4Mn-5O cluster of the oxygen-evolving complex. It may also provide a ligand for a Cl- that is required for oxygen evolution. PSII binds additional chlorophylls, carotenoids and specific lipids. is required as a cofactor.

It is found in the plastid. Its subcellular location is the chloroplast thylakoid membrane. Functionally, one of the components of the core complex of photosystem II (PSII). It binds chlorophyll and helps catalyze the primary light-induced photochemical processes of PSII. PSII is a light-driven water:plastoquinone oxidoreductase, using light energy to abstract electrons from H(2)O, generating O(2) and a proton gradient subsequently used for ATP formation. The polypeptide is Photosystem II CP43 reaction center protein (Euglena gracilis).